Consider the following 491-residue polypeptide: Aspartyl/glutamyl-tRNA(Asn/Gln) amidotransferase subunit B (491 aa).

This sequence belongs to the GatB/GatE family. GatB subfamily. As to quaternary structure, heterotrimer of A, B and C subunits.

It carries out the reaction L-glutamyl-tRNA(Gln) + L-glutamine + ATP + H2O = L-glutaminyl-tRNA(Gln) + L-glutamate + ADP + phosphate + H(+). The catalysed reaction is L-aspartyl-tRNA(Asn) + L-glutamine + ATP + H2O = L-asparaginyl-tRNA(Asn) + L-glutamate + ADP + phosphate + 2 H(+). In terms of biological role, allows the formation of correctly charged Asn-tRNA(Asn) or Gln-tRNA(Gln) through the transamidation of misacylated Asp-tRNA(Asn) or Glu-tRNA(Gln) in organisms which lack either or both of asparaginyl-tRNA or glutaminyl-tRNA synthetases. The reaction takes place in the presence of glutamine and ATP through an activated phospho-Asp-tRNA(Asn) or phospho-Glu-tRNA(Gln). This Nostoc punctiforme (strain ATCC 29133 / PCC 73102) protein is Aspartyl/glutamyl-tRNA(Asn/Gln) amidotransferase subunit B.